The sequence spans 72 residues: PAMP-induced secreted peptide 1 (72 aa).

A signal peptide spans 1–30 (MRRVSWSTVLIVVVMVSLFFVEHVVVPAAA). 4-hydroxyproline is present on residues proline 65 and proline 67.

Post-translationally, contains 4-hydroxyproline; hydroxylated on Pro-65 and Pro-67. Expressed in guard cells, hydathodes, leaf trichomes, and vascular tissues of leaves and roots.

The protein resides in the secreted. The protein localises to the extracellular space. It localises to the apoplast. Endogenous secreted peptide that acts as elicitor of immune response and positive regulator of defense response. Amplifies the immune response triggered by flg22, the active epitope of bacterial flagellin. Acts as a negative regulator of root growth. This Arabidopsis thaliana (Mouse-ear cress) protein is PAMP-induced secreted peptide 1.